The chain runs to 598 residues: Elongation factor 4 (598 aa).

One can recognise a tr-type G domain in the interval 4–186; sequence SRLRNFSIIA…EIVKKIPPPK (183 aa). GTP contacts are provided by residues 16–21 and 133–136; these read DHGKST and NKID.

The protein belongs to the TRAFAC class translation factor GTPase superfamily. Classic translation factor GTPase family. LepA subfamily.

The protein resides in the cell inner membrane. It carries out the reaction GTP + H2O = GDP + phosphate + H(+). Its function is as follows. Required for accurate and efficient protein synthesis under certain stress conditions. May act as a fidelity factor of the translation reaction, by catalyzing a one-codon backward translocation of tRNAs on improperly translocated ribosomes. Back-translocation proceeds from a post-translocation (POST) complex to a pre-translocation (PRE) complex, thus giving elongation factor G a second chance to translocate the tRNAs correctly. Binds to ribosomes in a GTP-dependent manner. The protein is Elongation factor 4 of Pelobacter propionicus (strain DSM 2379 / NBRC 103807 / OttBd1).